Consider the following 335-residue polypeptide: Ornithine carbamoyltransferase (335 aa).

Carbamoyl phosphate is bound by residues 60–63 (STRT), Q87, R111, and 138–141 (HPTQ). L-ornithine contacts are provided by residues N171, D235, and 239 to 240 (SM). Carbamoyl phosphate is bound by residues 277–278 (CL) and R322.

Belongs to the aspartate/ornithine carbamoyltransferase superfamily. OTCase family.

The protein localises to the cytoplasm. The enzyme catalyses carbamoyl phosphate + L-ornithine = L-citrulline + phosphate + H(+). Its pathway is amino-acid biosynthesis; L-arginine biosynthesis; L-arginine from L-ornithine and carbamoyl phosphate: step 1/3. In terms of biological role, reversibly catalyzes the transfer of the carbamoyl group from carbamoyl phosphate (CP) to the N(epsilon) atom of ornithine (ORN) to produce L-citrulline. The polypeptide is Ornithine carbamoyltransferase (Streptomyces avermitilis (strain ATCC 31267 / DSM 46492 / JCM 5070 / NBRC 14893 / NCIMB 12804 / NRRL 8165 / MA-4680)).